The sequence spans 473 residues: Photosystem II CP43 reaction center protein (473 aa).

The propeptide occupies 1–14 (MKTLYSLRRFYPVE). Residue Thr-15 is modified to N-acetylthreonine. Phosphothreonine is present on Thr-15. 5 helical membrane passes run 69 to 93 (LFEV…PHLA), 134 to 155 (LLGP…KDRN), 178 to 200 (KALY…RKIT), 255 to 275 (KPFA…LSYS), and 291 to 312 (WFNN…ASQA). Glu-367 is a [CaMn4O5] cluster binding site. The helical transmembrane segment at 447–471 (RARAAAAGFEKGIDRDLEPVLSMTP) threads the bilayer.

Belongs to the PsbB/PsbC family. PsbC subfamily. In terms of assembly, PSII is composed of 1 copy each of membrane proteins PsbA, PsbB, PsbC, PsbD, PsbE, PsbF, PsbH, PsbI, PsbJ, PsbK, PsbL, PsbM, PsbT, PsbX, PsbY, PsbZ, Psb30/Ycf12, at least 3 peripheral proteins of the oxygen-evolving complex and a large number of cofactors. It forms dimeric complexes. The cofactor is Binds multiple chlorophylls and provides some of the ligands for the Ca-4Mn-5O cluster of the oxygen-evolving complex. It may also provide a ligand for a Cl- that is required for oxygen evolution. PSII binds additional chlorophylls, carotenoids and specific lipids..

It localises to the plastid. It is found in the chloroplast thylakoid membrane. Its function is as follows. One of the components of the core complex of photosystem II (PSII). It binds chlorophyll and helps catalyze the primary light-induced photochemical processes of PSII. PSII is a light-driven water:plastoquinone oxidoreductase, using light energy to abstract electrons from H(2)O, generating O(2) and a proton gradient subsequently used for ATP formation. The protein is Photosystem II CP43 reaction center protein of Acorus calamus var. americanus (American sweet flag).